The sequence spans 289 residues: MTIFTKNSVPLRARVETMSAFSLPSVNPSRADSEVILHAKVEAFYYDRFLALRNVYLPIYKNLITTLIGPSGCGKSTLLRCFNRLNDLIPQTRLQGQIIFKGRNIYHPLEDAVVLRRNIGMVFQKPNPFPKSIYNNVAFGLRIQGYRGDIDEIVEHSLRQAILWDEVKNKLKENALSLSGGQQQRLCIARMLAVQPEIILMDEPCSALDPTSTKQIEALIKEIKQQHTIVIVTHNMQQASRISDMTAFFNTEMIEGSRTGELVEYDHTPVIFQNPTREITRQYVNGYFG.

The ABC transporter domain occupies L37 to T276. G69–S76 is an ATP binding site.

Belongs to the ABC transporter superfamily. Phosphate importer (TC 3.A.1.7) family. In terms of assembly, the complex is composed of two ATP-binding proteins (PstB), two transmembrane proteins (PstC and PstA) and a solute-binding protein (PstS).

The protein localises to the cell inner membrane. The catalysed reaction is phosphate(out) + ATP + H2O = ADP + 2 phosphate(in) + H(+). Its function is as follows. Part of the ABC transporter complex PstSACB involved in phosphate import. Responsible for energy coupling to the transport system. In Trichormus variabilis (strain ATCC 29413 / PCC 7937) (Anabaena variabilis), this protein is Phosphate import ATP-binding protein PstB 2.